A 361-amino-acid chain; its full sequence is S-adenosylmethionine:tRNA ribosyltransferase-isomerase (361 aa).

This sequence belongs to the QueA family. As to quaternary structure, monomer.

The protein localises to the cytoplasm. It carries out the reaction 7-aminomethyl-7-carbaguanosine(34) in tRNA + S-adenosyl-L-methionine = epoxyqueuosine(34) in tRNA + adenine + L-methionine + 2 H(+). Its pathway is tRNA modification; tRNA-queuosine biosynthesis. Transfers and isomerizes the ribose moiety from AdoMet to the 7-aminomethyl group of 7-deazaguanine (preQ1-tRNA) to give epoxyqueuosine (oQ-tRNA). The chain is S-adenosylmethionine:tRNA ribosyltransferase-isomerase from Actinobacillus pleuropneumoniae serotype 7 (strain AP76).